The sequence spans 495 residues: Myocyte-specific enhancer factor 2A (495 aa).

The 55-residue stretch at 3 to 57 (RKKIQITRIMDERNRQVTFTKRKFGLMKKAYELSVLCDCEIALIIFNSSNKLFQY) folds into the MADS-box domain. A DNA-binding region (mef2-type) is located at residues 58–86 (ASTDMDKVLLKYTEYNEPHESRTNSDIVE). The residue at position 59 (Ser-59) is a Phosphoserine; by CK2. Ser-98 bears the Phosphoserine mark. The tract at residues 175-225 (AESSMLSPPPATLHRNVSPGAPQRPPSTGSAGGMLSTTDLTVPNGAGNGPV) is disordered. Residue Ser-235 is modified to Phosphoserine. A disordered region spans residues 242-271 (TGANSVGKVMPTKSPPPPGGGSVGMNSRKP). At Lys-249 the chain carries N6-acetyllysine. Ser-255 is modified (phosphoserine). The segment at 266 to 283 (MNSRKPDLRVVIPPSSKG) is required for interaction with MAPKs. Phosphothreonine; by MAPK7 and MAPK14 occurs at positions 304 and 311. Ser-347 carries the post-translational modification Phosphoserine; by MAPK7. Polar residues predominate over residues 382–394 (SNLSINTNQNINI). Positions 382-495 (SNLSINTNQN…KRMRMDTWVT (114 aa)) are disordered. The residue at position 395 (Lys-395) is an N6-acetyllysine; alternate. Lys-395 participates in a covalent cross-link: Glycyl lysine isopeptide (Lys-Gly) (interchain with G-Cter in SUMO); alternate. Ser-400 carries the phosphoserine; by CDK5 modification. Thr-407 carries the phosphothreonine modification. Positions 421 to 433 (QQPPPQPPQPQPQ) are enriched in pro residues. Ser-441 carries the post-translational modification Phosphoserine. Low complexity predominate over residues 441-454 (SPVDSLSSSSSSYD). Composition is skewed to basic and acidic residues over residues 455–465 (GSDREDPRGDF) and 476–495 (NAEDRESPSVKRMRMDTWVT).

As to quaternary structure, binds DNA as a homo- or heterodimer. Dimerizes with MEF2D. Interacts with HDAC7. Interacts with PIAS1; the interaction enhances sumoylation. Interacts with HDAC4, HDAC9 and SLC2A4RG. Interacts (via the N-terminal) with MAPK7; the interaction results in the phosphorylation and transcriptional activity of MEF2A. Constitutive phosphorylation on Ser-400 promotes Lys-395 sumoylation thus preventing acetylation at this site. Dephosphorylation on Ser-400 by PPP3CA upon neuron depolarization promotes a switch from sumoylation to acetylation on residue Lys-395 leading to inhibition of dendrite claw differentiation. Phosphorylation on Thr-304 and Thr-311 are the main sites involved in p38 MAPK signaling and activate transcription. Phosphorylated on these sites by MAPK14/p38alpha and MAPK11/p38beta, but not by MAPK13/p38delta nor by MAPK12/p38gamma. Phosphorylation on Ser-400 by CDK5 induced by neurotoxicity inhibits MEF2A transcriptional activation leading to apoptosis of cortical neurons. Phosphorylation on Thr-304, Thr-311 and Ser-347 can be induced by EGF. Post-translationally, sumoylation on Lys-395 is enhanced by PIAS1 and represses transcriptional activity. Phosphorylation on Ser-400 is required for sumoylation. Has no effect on nuclear location nor on DNA binding. Sumoylated with SUMO1 and, to a lesser extent with SUMO2 and SUMO3. PIASx facilitates sumoylation in postsynaptic dendrites in the cerebellar cortex and promotes their morphogenesis. In terms of processing, acetylation on Lys-395 activates transcriptional activity. Acetylated by p300 on several sites in diffentiating myocytes. Acetylation on Lys-4 increases DNA binding and transactivation. Hyperacetylation by p300 leads to enhanced cardiac myocyte growth and heart failure. Proteolytically cleaved in cerebellar granule neurons on several sites by caspase 3 and caspase 7 following neurotoxicity. Preferentially cleaves the CDK5-mediated hyperphosphorylated form which leads to neuron apoptosis and transcriptional inactivation.

Its subcellular location is the nucleus. Its function is as follows. Transcriptional activator which binds specifically to the MEF2 element, 5'-YTA[AT](4)TAR-3', found in numerous muscle-specific genes. Also involved in the activation of numerous growth factor- and stress-induced genes. Mediates cellular functions not only in skeletal and cardiac muscle development, but also in neuronal differentiation and survival. Plays diverse roles in the control of cell growth, survival and apoptosis via p38 MAPK signaling in muscle-specific and/or growth factor-related transcription. In cerebellar granule neurons, phosphorylated and sumoylated MEF2A represses transcription of NUR77 promoting synaptic differentiation. Associates with chromatin to the ZNF16 promoter. In Rattus norvegicus (Rat), this protein is Myocyte-specific enhancer factor 2A (Mef2a).